A 320-amino-acid chain; its full sequence is Aspartate carbamoyltransferase catalytic subunit (320 aa).

The carbamoyl phosphate site is built by Arg-53 and Thr-54. Lys-82 is a binding site for L-aspartate. 3 residues coordinate carbamoyl phosphate: Arg-103, His-131, and Gln-134. Residues Arg-164 and Arg-227 each contribute to the L-aspartate site. The carbamoyl phosphate site is built by Leu-266 and Pro-267.

Belongs to the aspartate/ornithine carbamoyltransferase superfamily. ATCase family. Heterododecamer (2C3:3R2) of six catalytic PyrB chains organized as two trimers (C3), and six regulatory PyrI chains organized as three dimers (R2).

It carries out the reaction carbamoyl phosphate + L-aspartate = N-carbamoyl-L-aspartate + phosphate + H(+). It functions in the pathway pyrimidine metabolism; UMP biosynthesis via de novo pathway; (S)-dihydroorotate from bicarbonate: step 2/3. In terms of biological role, catalyzes the condensation of carbamoyl phosphate and aspartate to form carbamoyl aspartate and inorganic phosphate, the committed step in the de novo pyrimidine nucleotide biosynthesis pathway. The polypeptide is Aspartate carbamoyltransferase catalytic subunit (Bifidobacterium longum subsp. infantis (strain ATCC 15697 / DSM 20088 / JCM 1222 / NCTC 11817 / S12)).